A 101-amino-acid chain; its full sequence is MILEHVLVLSAYLFSIGIYGLITSRNMVRALMCLELILNAVNINFVTFSDFFDNRQLKGDIFSIFVIAIAAAEAAIGLAIVSSIYRNRKSTRINQSNLLNN.

3 helical membrane passes run 2-22 (ILEH…YGLI), 32-52 (MCLE…SDFF), and 61-81 (IFSI…LAIV).

It belongs to the complex I subunit 4L family. In terms of assembly, NDH is composed of at least 16 different subunits, 5 of which are encoded in the nucleus.

The protein localises to the plastid. The protein resides in the chloroplast thylakoid membrane. The enzyme catalyses a plastoquinone + NADH + (n+1) H(+)(in) = a plastoquinol + NAD(+) + n H(+)(out). It catalyses the reaction a plastoquinone + NADPH + (n+1) H(+)(in) = a plastoquinol + NADP(+) + n H(+)(out). Its function is as follows. NDH shuttles electrons from NAD(P)H:plastoquinone, via FMN and iron-sulfur (Fe-S) centers, to quinones in the photosynthetic chain and possibly in a chloroplast respiratory chain. The immediate electron acceptor for the enzyme in this species is believed to be plastoquinone. Couples the redox reaction to proton translocation, and thus conserves the redox energy in a proton gradient. In Nicotiana sylvestris (Wood tobacco), this protein is NAD(P)H-quinone oxidoreductase subunit 4L, chloroplastic.